Reading from the N-terminus, the 109-residue chain is Globin (109 aa).

Residues 3–109 (PLTAAEVSSL…IFPIAGIHAL (107 aa)) form the Globin domain.

This sequence belongs to the globin family. In terms of assembly, monomer.

Its function is as follows. Oxygen binding protein. The polypeptide is Globin (Dicrocoelium dendriticum (Small liver fluke)).